Here is a 656-residue protein sequence, read N- to C-terminus: Protein EMBRYO SAC DEVELOPMENT ARREST 30 (656 aa).

A helical; Signal-anchor for type II membrane protein membrane pass occupies residues 9–29 (WIALFVLILSMGSLVVHLSMT). Asn-119 carries an N-linked (GlcNAc...) asparagine glycan. Residues 381-426 (LSELVGPETPLPENTYKMPPRKSDKQLKEEWNKAGPRPRPLPPPPD) form a disordered region. A compositionally biased stretch (basic and acidic residues) spans 401 to 412 (RKSDKQLKEEWN). Pro residues predominate over residues 417 to 426 (RPRPLPPPPD). N-linked (GlcNAc...) asparagine glycans are attached at residues Asn-444, Asn-522, Asn-534, and Asn-544. The disordered stretch occupies residues 631 to 656 (SETEEEFAKSKVASAFDQDEEWDPND). A compositionally biased stretch (acidic residues) spans 647-656 (DQDEEWDPND).

This sequence belongs to the glycosyltransferase GT106 family.

The protein localises to the membrane. It functions in the pathway glycan metabolism. The chain is Protein EMBRYO SAC DEVELOPMENT ARREST 30 from Arabidopsis thaliana (Mouse-ear cress).